The following is a 436-amino-acid chain: tRNA(Ile)-lysidine synthase (436 aa).

Position 27–32 (27–32 (SGGVDS)) interacts with ATP.

Belongs to the tRNA(Ile)-lysidine synthase family.

It is found in the cytoplasm. It catalyses the reaction cytidine(34) in tRNA(Ile2) + L-lysine + ATP = lysidine(34) in tRNA(Ile2) + AMP + diphosphate + H(+). Its function is as follows. Ligates lysine onto the cytidine present at position 34 of the AUA codon-specific tRNA(Ile) that contains the anticodon CAU, in an ATP-dependent manner. Cytidine is converted to lysidine, thus changing the amino acid specificity of the tRNA from methionine to isoleucine. The protein is tRNA(Ile)-lysidine synthase of Vibrio vulnificus (strain CMCP6).